Consider the following 339-residue polypeptide: 2-keto-3-deoxygluconate permease (339 aa).

A run of 10 helical transmembrane segments spans residues 10-30, 42-62, 77-97, 100-120, 141-161, 163-183, 199-219, 224-244, 254-274, and 289-309; these read IPGG…TFAP, GLIS…GASI, LVVT…RILP, GVEV…AMDM, AFVL…LGTA, IASF…VGFA, VQTL…LSVI, LLGV…LIVA, TAGI…VLIA, and TLVA…TAMW. A disordered region spans residues 315–339; sequence GGDGTVPKEDAVEEKAEQQRRRIIK. Over residues 320-339 the composition is skewed to basic and acidic residues; sequence VPKEDAVEEKAEQQRRRIIK.

The protein belongs to the KdgT transporter family.

It localises to the cell inner membrane. It carries out the reaction 2-dehydro-3-deoxy-D-gluconate(in) + H(+)(in) = 2-dehydro-3-deoxy-D-gluconate(out) + H(+)(out). Uptake is inhibited by the protonophore uncouplers carbonyl cyanide m-chlorophenylhydrazone (CCCP) and 2,4-dinitrophenol, and by NaN(3). Catalyzes the proton-dependent uptake of 2-keto-3-deoxygluconate (KDG) into the cell. Can also mediate the uptake of glucuronate with a low affinity, and may mediate the uptake of 5-keto-4-deoxyuronate (DKI) and 2,5-diketo-3-deoxygluconate (DKII), which are intermediates in pectin degradation. The sequence is that of 2-keto-3-deoxygluconate permease from Dickeya chrysanthemi (Pectobacterium chrysanthemi).